Reading from the N-terminus, the 61-residue chain is Probable tautomerase SMU_1087 (61 aa).

Pro-2 serves as the catalytic Proton acceptor; via imino nitrogen.

Belongs to the 4-oxalocrotonate tautomerase family.

The sequence is that of Probable tautomerase SMU_1087 from Streptococcus mutans serotype c (strain ATCC 700610 / UA159).